The following is a 283-amino-acid chain: Shikimate kinase (283 aa).

Position 86 to 96 (Pro-86 to Ala-96) interacts with ATP.

This sequence belongs to the GHMP kinase family. Archaeal shikimate kinase subfamily.

It localises to the cytoplasm. The catalysed reaction is shikimate + ATP = 3-phosphoshikimate + ADP + H(+). Its pathway is metabolic intermediate biosynthesis; chorismate biosynthesis; chorismate from D-erythrose 4-phosphate and phosphoenolpyruvate: step 5/7. The sequence is that of Shikimate kinase from Methanococcus maripaludis (strain C5 / ATCC BAA-1333).